Reading from the N-terminus, the 282-residue chain is Homeobox protein CDX-4 (282 aa).

Disordered stretches follow at residues 13–36 and 98–156; these read MYPGTLRSPGGSSTAGVGTSGGSG and MNDM…SPYA. Low complexity predominate over residues 20–29; it reads SPGGSSTAGV. 2 stretches are compositionally biased toward polar residues: residues 110-124 and 133-148; these read DYSTLGPTSGASNGG and SLVSLDSGTSGATSPS. Positions 171–230 form a DNA-binding region, homeobox; it reads KEKYRVVYTDHQRLELEKEFHCNRYITIRRKSELAVNLGLSERQVKIWFQNRRAKERKMI.

The protein belongs to the Caudal homeobox family.

The protein localises to the nucleus. The protein is Homeobox protein CDX-4 (Cdx4) of Mus musculus (Mouse).